The chain runs to 504 residues: Peptidyl-prolyl cis-trans isomerase CYP57 (504 aa).

Ser2 is subject to N-acetylserine. The region spanning 16 to 167 is the PPIase cyclophilin-type domain; that stretch reads IVNTTHGPID…DPAPKILSVE (152 aa). Positions 204 to 274 form a coiled coil; sequence NLLSFGEEAE…AKKEAAQKDK (71 aa). Composition is skewed to basic and acidic residues over residues 237–275, 344–354, and 364–374; these read RLLK…KDKS, EDEKPRMEKLS, and AKAEHMEKGDT. Disordered stretches follow at residues 237-374, 416-441, and 482-504; these read RLLK…KGDT, AKPF…KEED, and EKFN…KSLA. Residues 416–434 are compositionally biased toward polar residues; that stretch reads AKPFTSSNEPVVLTSSSEP. Residues 494–504 are compositionally biased toward basic and acidic residues; sequence REREWSGKSLA.

This sequence belongs to the cyclophilin-type PPIase family. In terms of tissue distribution, ubiquitous.

It localises to the nucleus. Its subcellular location is the cytoplasm. It carries out the reaction [protein]-peptidylproline (omega=180) = [protein]-peptidylproline (omega=0). Its function is as follows. PPIases accelerate the folding of proteins. It catalyzes the cis-trans isomerization of proline imidic peptide bonds in oligopeptides. Involved in plant response to pathogen infection by increasing PAD4 expression in absence of EDS1 up-regulation. The chain is Peptidyl-prolyl cis-trans isomerase CYP57 (CYP57) from Arabidopsis thaliana (Mouse-ear cress).